The chain runs to 492 residues: Beclin 1-associated autophagy-related key regulator (492 aa).

Residue Ser29 is modified to Phosphoserine. The tract at residues 43 to 58 is cysteine repeats; it reads CPLCNTTRRRLTCAKC. A coiled-coil region spans residues 71 to 180; the sequence is DRERFIDKKE…KLGDLVEKKT (110 aa). The segment at 410-473 is disordered; it reads PGVAGESDES…PIASSSAGGM (64 aa). The segment at 413–492 is BATS; it reads AGESDESGDE…SWFKAYTGHR (80 aa). The segment covering 415–433 has biased composition (acidic residues); sequence ESDESGDERVSDEETDLGT. Ser416 carries the phosphoserine modification. At Thr429 the chain carries Phosphothreonine. Over residues 448 to 473 the composition is skewed to low complexity; sequence SQSVEVSQSQSTQASPPIASSSAGGM.

Belongs to the ATG14 family. As to quaternary structure, forms homooligomers; homo-oligomerization is essential for the roles in membrane tethering and enhancement of SNARE-mediated fusion. Component of the PI3K (PI3KC3/PI3K-III/class III phosphatidylinositol 3-kinase) complex I (PI3KC3-C1) in which the core composed of the catalytic subunit PIK3C3, the regulatory subunit PIK3R4 and BECN1 is associated with ATG14. PI3KC3-C1 displays a V-shaped architecture with PIK3R4 serving as a bridge between PIK3C3 and the ATG14:BECN1 subcomplex. PI3KC3-C1 can associate with further regulatory subunits. Interacts with PIK3CB. Interacts (via coiled-coil domain) with BECN2 (via coiled-coil domain); this interaction is tighter than BECN2 self-association. Interacts with the STX17-SNAP29 binary t-SNARE complex. Interacts with NRBF2. Interacts with PIK3C3 and BECN1; this interaction is increased in the absence of TMEM39A. Interacts with STEEP1; the interaction is required for trafficking of STING1 from the endoplasmic reticulum. Interacts with ARMC3 (via ARM domains). Ubiquitinated via 'Lys-6', 'Lys-11' and 'Lys-63'-linked polyubiquitin chains on multiple lysines by MARCHF7, leading to ATG14 aggregation and loss of interaction with STX17.

It is found in the cytoplasm. It localises to the endoplasmic reticulum membrane. The protein localises to the preautophagosomal structure membrane. The protein resides in the cytoplasmic vesicle. Its subcellular location is the autophagosome membrane. Required for both basal and inducible autophagy. Determines the localization of the autophagy-specific PI3-kinase complex PI3KC3-C1. Plays a role in autophagosome formation and MAP1LC3/LC3 conjugation to phosphatidylethanolamine. Promotes BECN1 translocation from the trans-Golgi network to autophagosomes. Enhances PIK3C3 activity in a BECN1-dependent manner. Essential for the autophagy-dependent phosphorylation of BECN1. Stimulates the phosphorylation of BECN1, but suppresses the phosphorylation PIK3C3 by AMPK. Binds to STX17-SNAP29 binary t-SNARE complex on autophagosomes and primes it for VAMP8 interaction to promote autophagosome-endolysosome fusion. Modulates the hepatic lipid metabolism. The polypeptide is Beclin 1-associated autophagy-related key regulator (Homo sapiens (Human)).